A 272-amino-acid chain; its full sequence is Shikimate dehydrogenase (NADP(+)) (272 aa).

Shikimate is bound by residues 19 to 21 (SLS) and threonine 66. The active-site Proton acceptor is lysine 70. Glutamate 82 serves as a coordination point for NADP(+). Shikimate contacts are provided by asparagine 91 and aspartate 106. NADP(+) contacts are provided by residues 129 to 133 (GAGGA), 151 to 156 (NRTPEK), and isoleucine 214. Residue tyrosine 216 participates in shikimate binding. Glycine 237 contributes to the NADP(+) binding site.

The protein belongs to the shikimate dehydrogenase family. Homodimer.

It carries out the reaction shikimate + NADP(+) = 3-dehydroshikimate + NADPH + H(+). It functions in the pathway metabolic intermediate biosynthesis; chorismate biosynthesis; chorismate from D-erythrose 4-phosphate and phosphoenolpyruvate: step 4/7. Functionally, involved in the biosynthesis of the chorismate, which leads to the biosynthesis of aromatic amino acids. Catalyzes the reversible NADPH linked reduction of 3-dehydroshikimate (DHSA) to yield shikimate (SA). The sequence is that of Shikimate dehydrogenase (NADP(+)) from Thermococcus kodakarensis (strain ATCC BAA-918 / JCM 12380 / KOD1) (Pyrococcus kodakaraensis (strain KOD1)).